A 481-amino-acid polypeptide reads, in one-letter code: Docking protein 1 (481 aa).

Met1 carries the post-translational modification N-acetylmethionine. The region spanning 4–119 is the PH domain; it reads AVMEGPLFLQ…WVQTLCRNAF (116 aa). Ser48 bears the Phosphoserine mark. The 109-residue stretch at 151–259 folds into the IRS-type PTB domain; it reads EGSQFWVTVQ…HRQKAQGKAG (109 aa). Ser269 and Ser291 each carry phosphoserine. The segment at 270 to 293 is disordered; sequence HEGEVAEGKLPSPPGPQELLDSPP. Tyr296 is modified (phosphotyrosine). The segment at 307-329 is disordered; it reads PCPSQDSLYSDPLDSTSAQAGEG. Over residues 310–325 the composition is skewed to polar residues; sequence SQDSLYSDPLDSTSAQ. 2 positions are modified to phosphotyrosine: Tyr337 and Tyr341. At Tyr362 the chain carries Phosphotyrosine; by INSR. Tyr377 bears the Phosphotyrosine mark. Position 398 is a phosphotyrosine; by INSR (Tyr398). Residues 404 to 481 form a disordered region; that stretch reads PATDDYAVPP…KTGVKSEGST (78 aa). Phosphotyrosine is present on Tyr409. Ser416 bears the Phosphoserine mark. Residues 436-458 show a composition bias toward polar residues; sequence ATGSGIKSHNSALYSQVQKSGAS. Position 449 is a phosphotyrosine (Tyr449). Ser460 carries the post-translational modification Phosphoserine.

Belongs to the DOK family. Type A subfamily. In terms of assembly, interacts with ABL1. Interacts with RasGAP and INPP5D/SHIP1. Interacts directly with phosphorylated ITGB3. Interacts with SRMS (via the SH2 and SH3 domains). In terms of processing, constitutively tyrosine-phosphorylated. Phosphorylated by TEC. Phosphorylated by LYN. Phosphorylated on tyrosine residues by the insulin receptor kinase. Results in the negative regulation of the insulin signaling pathway. Phosphorylated on tyrosine residues by SRMS. In terms of tissue distribution, expressed in pancreas, heart, leukocyte and spleen. Expressed in both resting and activated peripheral blood T-cells. Expressed in breast cancer.

Its subcellular location is the cytoplasm. It localises to the nucleus. The protein resides in the perinuclear region. Its function is as follows. DOK proteins are enzymatically inert adaptor or scaffolding proteins. They provide a docking platform for the assembly of multimolecular signaling complexes. DOK1 appears to be a negative regulator of the insulin signaling pathway. Modulates integrin activation by competing with talin for the same binding site on ITGB3. In Homo sapiens (Human), this protein is Docking protein 1 (DOK1).